A 421-amino-acid chain; its full sequence is O-acetyl-L-homoserine sulfhydrylase 1 (421 aa).

K206 carries the post-translational modification N6-(pyridoxal phosphate)lysine.

The protein belongs to the trans-sulfuration enzymes family. Homotetramer. Requires pyridoxal 5'-phosphate as cofactor.

It carries out the reaction O-acetyl-L-homoserine + hydrogen sulfide = L-homocysteine + acetate. It participates in amino-acid biosynthesis; L-methionine biosynthesis via de novo pathway; L-homocysteine from O-acetyl-L-homoserine: step 1/1. With respect to regulation, inhibited by the carbonyl reagents hydroxylamine and phenylhydrazine. Also inhibited by methionine and propargylglycine. Catalyzes the conversion of O-acetyl-L-homoserine (OAH) into homocysteine in the methionine biosynthesis pathway. Has weak activity with O-acetyl-L-serine, O-phospho-L-serine, L-serine, O-succinyl-L-homoserine and L-homoserine. Shows low CTT beta-lyase activity and very low CTT gamma-synthase activity. This chain is O-acetyl-L-homoserine sulfhydrylase 1, found in Thermus thermophilus (strain ATCC 27634 / DSM 579 / HB8).